The sequence spans 213 residues: Orotate phosphoribosyltransferase (213 aa).

A 5-phospho-alpha-D-ribose 1-diphosphate-binding site is contributed by Lys-26. Residue 34 to 35 participates in orotate binding; the sequence is FF. 5-phospho-alpha-D-ribose 1-diphosphate-binding positions include 72 to 73, Arg-99, Lys-100, Lys-103, His-105, and 124 to 132; these read YK and DDVITAGTA. Positions 128 and 156 each coordinate orotate.

It belongs to the purine/pyrimidine phosphoribosyltransferase family. PyrE subfamily. As to quaternary structure, homodimer. Requires Mg(2+) as cofactor.

The enzyme catalyses orotidine 5'-phosphate + diphosphate = orotate + 5-phospho-alpha-D-ribose 1-diphosphate. The protein operates within pyrimidine metabolism; UMP biosynthesis via de novo pathway; UMP from orotate: step 1/2. In terms of biological role, catalyzes the transfer of a ribosyl phosphate group from 5-phosphoribose 1-diphosphate to orotate, leading to the formation of orotidine monophosphate (OMP). In Pseudomonas putida (strain W619), this protein is Orotate phosphoribosyltransferase.